The following is a 418-amino-acid chain: Protein-lysine 6-oxidase (418 aa).

The first 20 residues, 1–20 (MRFAWTALLGSLQLCALVRC), serve as a signal peptide directing secretion. A propeptide spans 21-169 (APPAASHRQP…NRVEVDGMVG (149 aa)) (removed by BMP1). Residues 63 to 84 (YQPQRRRDPGATAPGAANATAP) form a disordered region. The span at 72 to 84 (GATAPGAANATAP) shows a compositional bias: low complexity. 3 N-linked (GlcNAc...) asparagine glycosylation sites follow: asparagine 80, asparagine 96, and asparagine 143. The tract at residues 130–175 (TSGAHDAGTSRADNQTAPGEVPTLSNLRPPNRVEVDGMVGDDPYNP) is disordered. The span at 140-157 (RADNQTAPGEVPTLSNLR) shows a compositional bias: polar residues. Tyrosine 188 carries the sulfotyrosine modification. The interval 214–418 (PDLVPDPYYI…YASGCTISPY (205 aa)) is lysyl-oxidase like. 5 disulfides stabilise this stretch: cysteine 239-cysteine 245, cysteine 292-cysteine 341, cysteine 325-cysteine 331, cysteine 352-cysteine 362, and cysteine 399-cysteine 413. Residues histidine 293, histidine 295, and histidine 297 each contribute to the Cu cation site. A cross-link (lysine tyrosylquinone (Lys-Tyr)) is located at residues 321–356 (KASFCLEDTSCDYGYHRRFACTAHTQGLSPGCYDTY). The residue at position 356 (tyrosine 356) is a 2',4',5'-topaquinone.

It belongs to the lysyl oxidase family. In terms of assembly, interacts with MFAP4. Interacts (via propeptide) with EFEMP2; this interaction is strong and facilitates formation of ternary complexes with ELN during elastic fiber assembly; this interaction limits interaction of EFEMP2 with FBLN5. Cu cation serves as cofactor. Requires lysine tyrosylquinone residue as cofactor. The lysine tyrosylquinone cross-link (LTQ) is generated by condensation of the epsilon-amino group of a lysine with a topaquinone produced by oxidation of tyrosine. In terms of processing, proteolytically cleaved by BMP1 which removes the propeptide. Also proteolytically cleaved by ADAMTS2 and ADAMTS14, but not by ADAMTS3, at an additional cleavage site downstream of the BMP1 cleavage site. The propeptide plays a role in directing the deposition of this enzyme to elastic fibers, via interaction with tropoelastin. Cleavage by BMP1 to remove the propeptide does not increase enzymatic activity but increases binding to collagen. Cleavage by ADAMTS2 produces a form with reduced collagen-binding activity. Post-translationally, sulfated at Tyr-188 and also at either Tyr-184 or Tyr-185 which enhances binding to collagen.

It is found in the secreted. It localises to the extracellular space. It carries out the reaction L-lysyl-[protein] + O2 + H2O = (S)-2-amino-6-oxohexanoyl-[protein] + H2O2 + NH4(+). In terms of biological role, responsible for the post-translational oxidative deamination of peptidyl lysine residues in precursors to fibrous collagen and elastin. Regulator of Ras expression. May play a role in tumor suppression. Plays a role in the aortic wall architecture. This Bos taurus (Bovine) protein is Protein-lysine 6-oxidase.